The sequence spans 186 residues: Ribosome-recycling factor (186 aa).

This sequence belongs to the RRF family.

Its subcellular location is the cytoplasm. In terms of biological role, responsible for the release of ribosomes from messenger RNA at the termination of protein biosynthesis. May increase the efficiency of translation by recycling ribosomes from one round of translation to another. In Endomicrobium trichonymphae, this protein is Ribosome-recycling factor.